A 293-amino-acid polypeptide reads, in one-letter code: Inner membrane ABC transporter permease protein YcjO (293 aa).

The Periplasmic segment spans residues 1-12 (MNRLFSGRSDMP). The helical transmembrane segment at 13 to 33 (FALLLLAPSLLLLGGLVAWPM) threads the bilayer. Over 34 to 77 (VSNIEISFLRLPLNPNIESTFVGVSNYVRILSDPGFWHSLWMTV) the chain is Cytoplasmic. In terms of domain architecture, ABC transmembrane type-1 spans 73 to 283 (LWMTVWYTAL…IIIFAVILLT (211 aa)). Residues 78–98 (WYTALVVAGSTVLGLAVAMFF) traverse the membrane as a helical segment. Residues 99-110 (NREFRLRKTARS) lie on the Periplasmic side of the membrane. A helical transmembrane segment spans residues 111–131 (LVILSYVTPSISLVFAWKYMF). At 132–135 (NNGY) the chain is on the cytoplasmic side. A helical transmembrane segment spans residues 136–156 (GIVNYLGVDLLHLYEQAPLWF). The Periplasmic segment spans residues 157 to 162 (DNPGSS). Residues 163–183 (FVLVVLFAIWRYFPYAFISFL) form a helical membrane-spanning segment. Residues 184-214 (AILQTIDKSLYEAAEMDGANAWQRFRIVTLP) lie on the Cytoplasmic side of the membrane. The chain crosses the membrane as a helical span at residues 215 to 235 (AIMPVLATVVTLRTIWMFYMF). Residues 236–261 (ADVYLLTTKVDILGVYLYKTAFAFND) are Periplasmic-facing. A helical transmembrane segment spans residues 262–282 (LGKAAAISVVLFIIIFAVILL). Residues 283 to 293 (TRKRVNLNGNK) lie on the Cytoplasmic side of the membrane.

This sequence belongs to the binding-protein-dependent transport system permease family. MalFG subfamily.

It localises to the cell inner membrane. Its function is as follows. Probably part of the binding-protein-dependent transport system YcjNOP. Probably responsible for the translocation of the substrate across the membrane. This Escherichia coli (strain K12) protein is Inner membrane ABC transporter permease protein YcjO (ycjO).